We begin with the raw amino-acid sequence, 236 residues long: Phosphoribosylaminoimidazole-succinocarboxamide synthase (236 aa).

The protein belongs to the SAICAR synthetase family.

It catalyses the reaction 5-amino-1-(5-phospho-D-ribosyl)imidazole-4-carboxylate + L-aspartate + ATP = (2S)-2-[5-amino-1-(5-phospho-beta-D-ribosyl)imidazole-4-carboxamido]succinate + ADP + phosphate + 2 H(+). It participates in purine metabolism; IMP biosynthesis via de novo pathway; 5-amino-1-(5-phospho-D-ribosyl)imidazole-4-carboxamide from 5-amino-1-(5-phospho-D-ribosyl)imidazole-4-carboxylate: step 1/2. The sequence is that of Phosphoribosylaminoimidazole-succinocarboxamide synthase from Pseudomonas syringae pv. tomato (strain ATCC BAA-871 / DC3000).